Reading from the N-terminus, the 95-residue chain is Large ribosomal subunit protein bL25 (95 aa).

It belongs to the bacterial ribosomal protein bL25 family. As to quaternary structure, part of the 50S ribosomal subunit; part of the 5S rRNA/L5/L18/L25 subcomplex. Contacts the 5S rRNA. Binds to the 5S rRNA independently of L5 and L18.

Its function is as follows. This is one of the proteins that binds to the 5S RNA in the ribosome where it forms part of the central protuberance. In Haemophilus influenzae (strain PittGG), this protein is Large ribosomal subunit protein bL25.